The sequence spans 263 residues: Type III pantothenate kinase (263 aa).

14-21 (DIGNTSVN) is a binding site for ATP. 115 to 118 (GADR) is a binding site for substrate. Catalysis depends on D117, which acts as the Proton acceptor. D137 is a K(+) binding site. T140 serves as a coordination point for ATP. Substrate is bound at residue T192.

It belongs to the type III pantothenate kinase family. As to quaternary structure, homodimer. The cofactor is NH4(+). It depends on K(+) as a cofactor.

The protein resides in the cytoplasm. It carries out the reaction (R)-pantothenate + ATP = (R)-4'-phosphopantothenate + ADP + H(+). It participates in cofactor biosynthesis; coenzyme A biosynthesis; CoA from (R)-pantothenate: step 1/5. Functionally, catalyzes the phosphorylation of pantothenate (Pan), the first step in CoA biosynthesis. The polypeptide is Type III pantothenate kinase (Dehalococcoides mccartyi (strain ATCC BAA-2100 / JCM 16839 / KCTC 5957 / BAV1)).